Consider the following 1030-residue polypeptide: MMS19 nucleotide excision repair protein homolog (1030 aa).

The residue at position 2 (A2) is an N-acetylalanine. K496 bears the N6-acetyllysine mark. HEAT repeat units follow at residues Q866–K904, L908–Q946, S949–P987, and L990–P1028. S1027 is subject to Phosphoserine.

Belongs to the MET18/MMS19 family. As to quaternary structure, component of the CIA complex. In the CIA complex, interacts directly with CIAO2B and CIAO3. Component of the MMXD complex, composed of CIAO1, ERCC2, CIAO2B, MMS19 and SLC25A5. Interacts with CIAO2B; the interaction is direct. Interacts with ERCC2/XPD; the interaction is direct. Interacts with ERCC3/XPB and NCOA3/RAC3. Interacts with RTEL1; the interaction mediates the association of RTEL1 with the CIA complex. Interacts with BRIP1. Interacts with KIF4A; the interaction facilitates the transfer of Fe-S clusters to KIF4A to ensure proper localization of KIF4A to the mitotic machinery components. Interacts with CCDC117; the interaction is indirect. Post-translationally, ubiquitinated; undergoes 'Lys-48'-linked polyubiquitination by MAGEF1-NSMCE1 ubiquitin ligase complex leading to proteasomal degradation. As to expression, ubiquitously expressed with higher expression in testis.

The protein resides in the nucleus. Its subcellular location is the cytoplasm. It is found in the cytoskeleton. The protein localises to the spindle. It localises to the microtubule organizing center. The protein resides in the centrosome. Its function is as follows. Key component of the cytosolic iron-sulfur protein assembly (CIA) complex, a multiprotein complex that mediates the incorporation of iron-sulfur cluster into apoproteins specifically involved in DNA metabolism and genomic integrity. In the CIA complex, MMS19 acts as an adapter between early-acting CIA components and a subset of cellular target iron-sulfur proteins such as ERCC2/XPD, FANCJ and RTEL1, thereby playing a key role in nucleotide excision repair (NER), homologous recombination-mediated double-strand break DNA repair, DNA replication and RNA polymerase II (POL II) transcription. As part of the mitotic spindle-associated MMXD complex, plays a role in chromosome segregation, probably by facilitating iron-sulfur (Fe-S) cluster assembly into ERCC2/XPD. Together with CIAO2, facilitates the transfer of Fe-S clusters to the motor protein KIF4A, which ensures proper localization of KIF4A to mitotic machinery components to promote the progression of mitosis. Indirectly acts as a transcriptional coactivator of estrogen receptor (ER), via its role in iron-sulfur insertion into some component of the TFIIH-machinery. The protein is MMS19 nucleotide excision repair protein homolog of Homo sapiens (Human).